The following is a 432-amino-acid chain: Selenocysteine lyase (432 aa).

Met1 carries the post-translational modification N-acetylmethionine. A disordered region spans residues 1-20 (MDVARNGARGSVESPPNRKV). Phosphoserine is present on Ser117. At Lys247 the chain carries N6-(pyridoxal phosphate)lysine. Cys375 acts as the S-selanylcysteine intermediate in catalysis.

It belongs to the class-V pyridoxal-phosphate-dependent aminotransferase family. As to quaternary structure, homodimer. Pyridoxal 5'-phosphate serves as cofactor.

The protein resides in the cytoplasm. The protein localises to the cytosol. The catalysed reaction is L-selenocysteine + AH2 = hydrogenselenide + L-alanine + A + H(+). Its function is as follows. Catalyzes the decomposition of L-selenocysteine to L-alanine and elemental selenium. The protein is Selenocysteine lyase (Scly) of Rattus norvegicus (Rat).